Here is a 422-residue protein sequence, read N- to C-terminus: Phagosome assembly factor 1 (422 aa).

The protein belongs to the PHAF1 family. As to quaternary structure, interacts with BCAS3; the interaction is requrired for the association with the phagophore.

The protein localises to the cytoplasm. It is found in the preautophagosomal structure. Plays a regulatory role in autophagic activity. In complex with BCAS3, associates with the autophagosome formation site during both non-selective and selective autophagy. The sequence is that of Phagosome assembly factor 1 from Mus musculus (Mouse).